Consider the following 477-residue polypeptide: Ankyrin repeat, SAM and basic leucine zipper domain-containing protein 1 (477 aa).

The disordered stretch occupies residues M1–G24. S17, S18, and S20 each carry phosphoserine. ANK repeat units follow at residues E45–S74, Y78–F107, D110–V144, R148–A177, N181–L210, and D214–G243. The SAM domain occupies S272–M334.

As to quaternary structure, interacts with DDX4, PIWIL1, RANBP9 and TDRD1.

It localises to the cytoplasm. Its function is as follows. Plays a central role during spermatogenesis by repressing transposable elements and preventing their mobilization, which is essential for the germline integrity. Acts via the piRNA metabolic process, which mediates the repression of transposable elements during meiosis by forming complexes composed of piRNAs and Piwi proteins and governs the methylation and subsequent repression of transposons. Its association with pi-bodies suggests a participation in the primary piRNAs metabolic process. Required prior to the pachytene stage to facilitate the production of multiple types of piRNAs, including those associated with repeats involved in the regulation of retrotransposons. May act by mediating protein-protein interactions during germ cell maturation. In Echinops telfairi (Lesser hedgehog tenrec), this protein is Ankyrin repeat, SAM and basic leucine zipper domain-containing protein 1 (ASZ1).